The primary structure comprises 504 residues: MSVGTVLLTALLALVGYLLMKWRSTMRHWQDLGIPCEEPHILMGSMKGVRTARSFNEIWTSYYNKFRGSGPFAGFYWFRRPAVFVLETSLAKQILIKEFNKFTDRGFFHNPEDDPLSGQLFLLDGQKWRTMRNKLSSTFTSGKMKYMFPTVVKVANEFTDVFGQNVAKSPVVEVRELLARFTTDVIGTCAFGIECSSLKDPDAEFREMGRRSLTEQRLGPVGIGFVNSFPNLARRLHMKMTAEPIERFFMRIVRETVAFREQNNIRRNDFMDQLIDLKNKPLMVSQSGESVNLTIEEIAAQAFVFFAAGFETSSTTMGFALYELAQNQDIQNRVRKECQEVIEKCNGELNYESMKDLVYLDQVVSETLRLYTVLPVLNRECLEDYEVPGHPKYVIKKGMPVLIPCGAMHRDEKLYANPNTFNPDNFSPERVKERDSVEWLPFGDGPRNCIGMRFGQMQARIGLALLIKDFKFSVCEKTTIPMTYNKEMFLIASNSGIYLKAERV.

Cysteine 449 lines the heme pocket.

It belongs to the cytochrome P450 family. Requires heme as cofactor.

The protein localises to the endoplasmic reticulum membrane. It is found in the microsome membrane. In terms of biological role, may be involved in the metabolism of insect hormones and in the breakdown of synthetic insecticides. The polypeptide is Probable cytochrome P450 6a21 (Cyp6a21) (Drosophila melanogaster (Fruit fly)).